Reading from the N-terminus, the 261-residue chain is Claudin-18 (261 aa).

Topologically, residues 1–6 are cytoplasmic; the sequence is MATTTC. A helical transmembrane segment spans residues 7–27; sequence QVVGLLLSLLGLAGCIAATGM. Residues 28–80 lie on the Extracellular side of the membrane; the sequence is DMWSTQDLYDNPVTSVFQYEGLWRSCVQQSSGFTECRPYFTILGLPAMLQAVR. The helical transmembrane segment at 81-101 threads the bilayer; sequence ALMIVGIVLGVIGILVSIFAL. The Cytoplasmic portion of the chain corresponds to 102 to 122; the sequence is KCIRIGSMDDSAKAKMTLTSG. A helical membrane pass occupies residues 123 to 143; it reads IMFIISGVCAIIGVSVFANML. Over 144–173 the chain is Extracellular; the sequence is VTNFWMSTANMYSGMGGMVQTVQTRYTFGA. Residues 174-194 form a helical membrane-spanning segment; the sequence is ALFVGWIAGGLTLIGGVMMCI. Topologically, residues 195–261 are cytoplasmic; sequence ACRGLTPDDR…QSHPTKYDYV (67 aa). Residues 195–261 form a required for role in regulation of RANKL-induced osteoclast differentiation region; that stretch reads ACRGLTPDDR…QSHPTKYDYV (67 aa). Serine 214 is modified (phosphoserine). The disordered stretch occupies residues 242 to 261; sequence DGGARTEDDEQSHPTKYDYV.

It belongs to the claudin family. As to quaternary structure, interacts with TJP2/ZO-2. Interacts with TJP1/ZO-1. Interacts with YAP1 (phosphorylated); the interaction sequesters YAP1 away from the nucleus and thereby restricts transcription of YAP1 target genes. Interacts with CLDN19. Expressed in the lung (at protein level).

The protein resides in the cell junction. It localises to the tight junction. It is found in the cell membrane. In terms of biological role, involved in alveolar fluid homeostasis via regulation of alveolar epithelial tight junction composition and therefore ion transport and solute permeability, potentially via downstream regulation of the actin cytoskeleton organization and beta-2-adrenergic signaling. Required for lung alveolarization and maintenance of the paracellular alveolar epithelial barrier. Acts to maintain epithelial progenitor cell proliferation and organ size, via regulation of YAP1 localization away from the nucleus and thereby restriction of YAP1 target gene transcription. Acts as a negative regulator of RANKL-induced osteoclast differentiation, potentially via relocation of TJP2/ZO-2 away from the nucleus, subsequently involved in bone resorption in response to calcium deficiency. Mediates the osteoprotective effects of estrogen, potentially via acting downstream of estrogen signaling independently of RANKL signaling pathways. Required for the formation of the gastric paracellular barrier via its role in tight junction formation, thereby involved in the response to gastric acidification. This chain is Claudin-18, found in Rattus norvegicus (Rat).